The primary structure comprises 85 residues: UPF0386 protein Bind_1628 (85 aa).

This sequence belongs to the UPF0386 family.

The protein is UPF0386 protein Bind_1628 of Beijerinckia indica subsp. indica (strain ATCC 9039 / DSM 1715 / NCIMB 8712).